We begin with the raw amino-acid sequence, 347 residues long: Zinc finger protein CONSTANS-LIKE 2 (347 aa).

Cysteine 16, cysteine 19, cysteine 39, histidine 44, cysteine 59, cysteine 62, cysteine 82, and histidine 87 together coordinate Zn(2+). Residues 16 to 58 (CDTCRSAACTVYCEADSAYLCTTCDARVHAANRVASRHERVRV) form a B box-type 1; atypical zinc finger. The segment at 59–101 (CQSCESAPAAFLCKADAASLCTACDAEIHSANPLARRHQRVPI) adopts a B box-type 2; atypical zinc-finger fold. Positions 278–320 (REARVLRYREKKKTRKFDKTIRYASRKAYAEIRPRIKGRFAKR) constitute a CCT domain.

Belongs to the CONSTANS family. As to expression, highly expressed in leaves. Expressed at lower levels in stems, flowers and siliques. Not detected in roots.

It localises to the nucleus. Functionally, putative transcription factor. Does not affect flowering time. The polypeptide is Zinc finger protein CONSTANS-LIKE 2 (COL2) (Arabidopsis thaliana (Mouse-ear cress)).